Here is a 311-residue protein sequence, read N- to C-terminus: Probable manganese-dependent inorganic pyrophosphatase (311 aa).

Residues His-9, Asp-13, Asp-15, Asp-77, His-99, and Asp-151 each coordinate Mn(2+).

This sequence belongs to the PPase class C family. Requires Mn(2+) as cofactor.

The protein localises to the cytoplasm. It catalyses the reaction diphosphate + H2O = 2 phosphate + H(+). The protein is Probable manganese-dependent inorganic pyrophosphatase of Streptococcus agalactiae serotype Ia (strain ATCC 27591 / A909 / CDC SS700).